The primary structure comprises 648 residues: MDKIEEIHKYNADNIQILEGLEAVRKRPGMYIGSIGFKGLHHLLWEIVDNSVDEAMAGFATEIKIKLYPNNVIEVEDNGRGMPTGIHSGTKKSAVETILTVLHAGGKFDGSNYKVSGGLHGVGASVVNALSSEFEVWVKRDGKLHYQQFRNGGIPVKPLEVIGNVSEVETGTTIKFHPDYTIMEKENFDFDTIIDHSKQIAYLNKGLKITVENVEKNIIKVFCFEGGLIDYVKELNKGKKLIVPEVIYAEGVFNDKNFTNGQDVIVEVAMQYNEAYTNSIVSYANNIQTIDGGTHEQGFYDALVRIYNNYAETNKLFKTSSEKITREDVKEGLVAIISIKHTDPIFEGQTKGKLENKDARIATNKILSDSLERYLNENPEIARAIIEKCLLSQHTRLLEIKAREASRKGNGLDLGNLPGKLADCSSKNAEIRELFIVEGNSAGGSAKMGRDRSIQAILPLRGKVINAEKNSFASVLSNKEIATMIHALGTGINTEFDINKLKYHKIIIMTDADVDGAHITTLLLTFFYRYMKPLIEYGFVYLAQPPLYKITSGKNVEYAYNDLQKEQIMAKLEDKRNVAIQRYKGLGEMDPEQLWETTMDPETRKMLQVQIDDAAICDTVFATLMGEEIEPRHDFIQENAKYANNIDI.

The Toprim domain maps to 432–546 (RELFIVEGNS…YGFVYLAQPP (115 aa)). The Mg(2+) site is built by Glu-438, Asp-511, and Asp-513.

It belongs to the type II topoisomerase GyrB family. Heterotetramer, composed of two GyrA and two GyrB chains. In the heterotetramer, GyrA contains the active site tyrosine that forms a transient covalent intermediate with DNA, while GyrB binds cofactors and catalyzes ATP hydrolysis. It depends on Mg(2+) as a cofactor. Mn(2+) is required as a cofactor. Ca(2+) serves as cofactor.

It is found in the cytoplasm. It catalyses the reaction ATP-dependent breakage, passage and rejoining of double-stranded DNA.. Functionally, a type II topoisomerase that negatively supercoils closed circular double-stranded (ds) DNA in an ATP-dependent manner to modulate DNA topology and maintain chromosomes in an underwound state. Negative supercoiling favors strand separation, and DNA replication, transcription, recombination and repair, all of which involve strand separation. Also able to catalyze the interconversion of other topological isomers of dsDNA rings, including catenanes and knotted rings. Type II topoisomerases break and join 2 DNA strands simultaneously in an ATP-dependent manner. This is DNA gyrase subunit B from Metamycoplasma hominis (strain ATCC 23114 / DSM 25592 / NBRC 14850 / NCTC 10111 / PG21) (Mycoplasma hominis).